Here is a 242-residue protein sequence, read N- to C-terminus: Phosphoribosylaminoimidazole-succinocarboxamide synthase (242 aa).

The protein belongs to the SAICAR synthetase family.

It carries out the reaction 5-amino-1-(5-phospho-D-ribosyl)imidazole-4-carboxylate + L-aspartate + ATP = (2S)-2-[5-amino-1-(5-phospho-beta-D-ribosyl)imidazole-4-carboxamido]succinate + ADP + phosphate + 2 H(+). The protein operates within purine metabolism; IMP biosynthesis via de novo pathway; 5-amino-1-(5-phospho-D-ribosyl)imidazole-4-carboxamide from 5-amino-1-(5-phospho-D-ribosyl)imidazole-4-carboxylate: step 1/2. This chain is Phosphoribosylaminoimidazole-succinocarboxamide synthase, found in Trichodesmium erythraeum (strain IMS101).